The primary structure comprises 317 residues: Tumor-associated calcium signal transducer 2 (317 aa).

Residues 1–24 (MARGLDLAPLLLLLLAMVAGFCTA) form the signal peptide. Over 25–270 (QINCTCPTNK…QFSMKRLTTG (246 aa)) the chain is Extracellular. N-linked (GlcNAc...) asparagine glycosylation occurs at N27. Residues 64-139 (TSKCLLLKAR…TDKGDQSLRC (76 aa)) enclose the Thyroglobulin type-1 domain. 3 disulfides stabilise this stretch: C67–C102, C113–C119, and C121–C139. N-linked (GlcNAc...) asparagine glycosylation occurs at N114. N-linked (GlcNAc...) asparagine glycans are attached at residues N162 and N202. Residues 271–291 (LIAVIAVVAVALVAGVVVLVV) form a helical membrane-spanning segment. Topologically, residues 292–317 (TNRRKSGKYKKVELKELGEMRSEPSL) are cytoplasmic.

Belongs to the EPCAM family.

It is found in the membrane. Its function is as follows. May function as a growth factor receptor. The chain is Tumor-associated calcium signal transducer 2 (Tacstd2) from Rattus norvegicus (Rat).